The sequence spans 102 residues: Urease subunit beta (102 aa).

It belongs to the urease beta subunit family. Heterotrimer of UreA (gamma), UreB (beta) and UreC (alpha) subunits. Three heterotrimers associate to form the active enzyme.

Its subcellular location is the cytoplasm. The catalysed reaction is urea + 2 H2O + H(+) = hydrogencarbonate + 2 NH4(+). It participates in nitrogen metabolism; urea degradation; CO(2) and NH(3) from urea (urease route): step 1/1. This Alteromonas mediterranea (strain DSM 17117 / CIP 110805 / LMG 28347 / Deep ecotype) protein is Urease subunit beta.